The following is a 248-amino-acid chain: NADP-dependent 3-hydroxy acid dehydrogenase YdfG (248 aa).

NADP(+) contacts are provided by residues 7-12 (GATAGF), 32-33 (RR), 54-55 (DV), and N81. A substrate-binding site is contributed by S134. NADP(+) contacts are provided by residues Y147, K151, and 177–185 (PGLVGGTEF). Catalysis depends on Y147, which acts as the Proton acceptor.

Belongs to the short-chain dehydrogenases/reductases (SDR) family. In terms of assembly, homotetramer.

It catalyses the reaction 3-hydroxypropanoate + NADP(+) = 3-oxopropanoate + NADPH + H(+). The catalysed reaction is L-allo-threonine + NADP(+) = aminoacetone + CO2 + NADPH. In terms of biological role, NADP-dependent dehydrogenase with broad substrate specificity acting on 3-hydroxy acids. Catalyzes the NADP-dependent oxidation of L-allo-threonine to L-2-amino-3-keto-butyrate, which is spontaneously decarboxylated into aminoacetone. Also acts on D-threonine, L-serine, D-serine, D-3-hydroxyisobutyrate, L-3-hydroxyisobutyrate, D-glycerate and L-glycerate. Able to catalyze the reduction of the malonic semialdehyde to 3-hydroxypropionic acid. YdfG is apparently supplementing RutE, the presumed malonic semialdehyde reductase involved in pyrimidine degradation since both are able to detoxify malonic semialdehyde. This Escherichia coli (strain K12) protein is NADP-dependent 3-hydroxy acid dehydrogenase YdfG.